A 657-amino-acid chain; its full sequence is Glycogen debranching enzyme (657 aa).

D336 serves as the catalytic Nucleophile. E371 serves as the catalytic Proton donor. The segment at 460–479 (ANGEENRDGTNNNHSFNHGI) is disordered.

It belongs to the glycosyl hydrolase 13 family.

The enzyme catalyses Hydrolysis of (1-&gt;6)-alpha-D-glucosidic linkages to branches with degrees of polymerization of three or four glucose residues in limit dextrin.. Its pathway is glycan degradation; glycogen degradation. In terms of biological role, removes maltotriose and maltotetraose chains that are attached by 1,6-alpha-linkage to the limit dextrin main chain, generating a debranched limit dextrin. This Enterobacter sp. (strain 638) protein is Glycogen debranching enzyme.